The primary structure comprises 244 residues: Probable 2-phosphosulfolactate phosphatase (244 aa).

This sequence belongs to the ComB family. Requires Mg(2+) as cofactor.

The catalysed reaction is (2R)-O-phospho-3-sulfolactate + H2O = (2R)-3-sulfolactate + phosphate. This is Probable 2-phosphosulfolactate phosphatase from Thermosynechococcus vestitus (strain NIES-2133 / IAM M-273 / BP-1).